The chain runs to 671 residues: MNKYLVPPPQANRTVTNLDLLINNLRGSSTPGAAEVDTRDILQRIVFILPTIKNPLNLDLVIKEIINSPRLLPPLIDLHDYQQLTDAFRATIKRKALVTDPTISFEAWLETCFQVITRFAGPGWKKLPLLAGLILADYDISADGPTLERKPGFPSKLKHLLKREFVTTFDQCLSIDTRNRSDATKWVPVLACISIAQVYSLLGDVAINYRRFLQVGLDLIFSNYGLEMGTALARLHAESGGDATTAGGLIGKKLKEPVVALLNTFAHIASSCIVHVDIDYIDRIQNKIILVCENQAETWRILTIESPTVMHHQESVQYLKWELFTLCIIMQGIANMLLTQKMNQFMYLQLAYKQLQALHSIYFIVDQMGSQFAAYDYVFFSAIDVLLSEYAPYIKNRGTIPPNKEFVAERLAANLAGTSNVGSHLPIDRSRVLFALNYYEQLVTVCHDSCVETIIYPMARSFLYPTSDIQQLKPLVEAAHSVILAGLAVPTNAVVNAKLIPEYMGGVLPLFPGVFSWNQFVLAIQSIVNTVSPPSEVFKTNQKLFRLVLDSLMKKCRDTPVGIPVPHSVTVSQEQEDIPPTQRAVVMLALINSLPYVDIRSFELWLQETWNMIEATPMLAENAPNKELAHAEHEFLVLEMWKMISGNIDQRLNDVAIRWWYKKNARVHGTL.

The next 8 membrane-spanning stretches (helical) occupy residues 127-147 (LPLLAGLILADYDISADGPTL), 187-207 (VPVLACISIAQVYSLLGDVAI), 212-232 (FLQVGLDLIFSNYGLEMGTAL), 258-278 (VVALLNTFAHIASSCIVHVDI), 318-338 (YLKWELFTLCIIMQGIANMLL), 372-392 (FAAYDYVFFSAIDVLLSEYAP), 475-495 (LVEAAHSVILAGLAVPTNAVV), and 504-524 (MGGVLPLFPGVFSWNQFVLAI).

It localises to the peroxisome membrane. Its function is as follows. Involved in peroxisome biosynthesis. Required for the import of a subset of matrix proteins into peroxisomes. In Yarrowia lipolytica (strain CLIB 122 / E 150) (Yeast), this protein is Peroxisomal membrane protein PEX17 (PEX17).